A 461-amino-acid chain; its full sequence is Photosystem II CP43 reaction center protein (461 aa).

Positions M1 to E2 are excised as a propeptide. Residue T3 is modified to N-acetylthreonine. At T3 the chain carries Phosphothreonine. Helical transmembrane passes span L57 to A81, L122 to N143, K166 to T188, K243 to S263, and W279 to S300. E355 serves as a coordination point for [CaMn4O5] cluster. A helical transmembrane segment spans residues R435 to P459.

The protein belongs to the PsbB/PsbC family. PsbC subfamily. In terms of assembly, PSII is composed of 1 copy each of membrane proteins PsbA, PsbB, PsbC, PsbD, PsbE, PsbF, PsbH, PsbI, PsbJ, PsbK, PsbL, PsbM, PsbT, PsbX, PsbY, PsbZ, Psb30/Ycf12, at least 3 peripheral proteins of the oxygen-evolving complex and a large number of cofactors. It forms dimeric complexes. Requires Binds multiple chlorophylls and provides some of the ligands for the Ca-4Mn-5O cluster of the oxygen-evolving complex. It may also provide a ligand for a Cl- that is required for oxygen evolution. PSII binds additional chlorophylls, carotenoids and specific lipids. as cofactor.

Its subcellular location is the plastid. It localises to the chloroplast thylakoid membrane. Its function is as follows. One of the components of the core complex of photosystem II (PSII). It binds chlorophyll and helps catalyze the primary light-induced photochemical processes of PSII. PSII is a light-driven water:plastoquinone oxidoreductase, using light energy to abstract electrons from H(2)O, generating O(2) and a proton gradient subsequently used for ATP formation. The polypeptide is Photosystem II CP43 reaction center protein (Tupiella akineta (Green alga)).